We begin with the raw amino-acid sequence, 307 residues long: UDP-3-O-acyl-N-acetylglucosamine deacetylase (307 aa).

Zn(2+) contacts are provided by H80, H239, and D243. H266 (proton donor) is an active-site residue.

It belongs to the LpxC family. It depends on Zn(2+) as a cofactor.

It catalyses the reaction a UDP-3-O-[(3R)-3-hydroxyacyl]-N-acetyl-alpha-D-glucosamine + H2O = a UDP-3-O-[(3R)-3-hydroxyacyl]-alpha-D-glucosamine + acetate. Its pathway is glycolipid biosynthesis; lipid IV(A) biosynthesis; lipid IV(A) from (3R)-3-hydroxytetradecanoyl-[acyl-carrier-protein] and UDP-N-acetyl-alpha-D-glucosamine: step 2/6. Its function is as follows. Catalyzes the hydrolysis of UDP-3-O-myristoyl-N-acetylglucosamine to form UDP-3-O-myristoylglucosamine and acetate, the committed step in lipid A biosynthesis. The chain is UDP-3-O-acyl-N-acetylglucosamine deacetylase from Neisseria meningitidis serogroup C (strain 053442).